The primary structure comprises 177 residues: Peptide methionine sulfoxide reductase MsrA 2 (177 aa).

Cys12 is an active-site residue.

This sequence belongs to the MsrA Met sulfoxide reductase family.

The enzyme catalyses L-methionyl-[protein] + [thioredoxin]-disulfide + H2O = L-methionyl-(S)-S-oxide-[protein] + [thioredoxin]-dithiol. It carries out the reaction [thioredoxin]-disulfide + L-methionine + H2O = L-methionine (S)-S-oxide + [thioredoxin]-dithiol. Functionally, has an important function as a repair enzyme for proteins that have been inactivated by oxidation. Catalyzes the reversible oxidation-reduction of methionine sulfoxide in proteins to methionine. This chain is Peptide methionine sulfoxide reductase MsrA 2, found in Staphylococcus aureus (strain MRSA252).